The chain runs to 510 residues: 2-isopropylmalate synthase (510 aa).

In terms of domain architecture, Pyruvate carboxyltransferase spans 4 to 266; that stretch reads IQVFDTTLRD…ETNLKLDETK (263 aa). Residues aspartate 13, histidine 201, histidine 203, and asparagine 237 each coordinate Mn(2+). Residues 390–510 form a regulatory domain region; that stretch reads QVETLQLQFV…DTARKDGVVS (121 aa).

Belongs to the alpha-IPM synthase/homocitrate synthase family. LeuA type 1 subfamily. Homodimer. Requires Mn(2+) as cofactor.

It localises to the cytoplasm. The catalysed reaction is 3-methyl-2-oxobutanoate + acetyl-CoA + H2O = (2S)-2-isopropylmalate + CoA + H(+). It participates in amino-acid biosynthesis; L-leucine biosynthesis; L-leucine from 3-methyl-2-oxobutanoate: step 1/4. Functionally, catalyzes the condensation of the acetyl group of acetyl-CoA with 3-methyl-2-oxobutanoate (2-ketoisovalerate) to form 3-carboxy-3-hydroxy-4-methylpentanoate (2-isopropylmalate). This is 2-isopropylmalate synthase from Staphylococcus carnosus (strain TM300).